Consider the following 445-residue polypeptide: Argininosuccinate synthase (445 aa).

ATP contacts are provided by residues Ala17–Ser25 and Ala43. Tyr99 is a binding site for L-citrulline. ATP is bound by residues Gly129 and Thr131. Residues Thr131, Asn135, and Asp136 each contribute to the L-aspartate site. Asn135 contacts L-citrulline. Asp136 serves as a coordination point for ATP. Residues Arg139 and Ser192 each contribute to the L-citrulline site. Asp194 lines the ATP pocket. L-citrulline contacts are provided by Thr201, Glu203, and Glu280.

This sequence belongs to the argininosuccinate synthase family. Type 2 subfamily. In terms of assembly, homotetramer.

It localises to the cytoplasm. The enzyme catalyses L-citrulline + L-aspartate + ATP = 2-(N(omega)-L-arginino)succinate + AMP + diphosphate + H(+). It participates in amino-acid biosynthesis; L-arginine biosynthesis; L-arginine from L-ornithine and carbamoyl phosphate: step 2/3. This chain is Argininosuccinate synthase, found in Polaromonas naphthalenivorans (strain CJ2).